The primary structure comprises 183 residues: Translation initiation factor IF-3 (183 aa).

The span at 1–13 shows a compositional bias: polar residues; that stretch reads MKQPDRNQQQGAK. Residues 1–24 form a disordered region; sequence MKQPDRNQQQGAKSNRPAINDEIR.

The protein belongs to the IF-3 family. As to quaternary structure, monomer.

The protein localises to the cytoplasm. In terms of biological role, IF-3 binds to the 30S ribosomal subunit and shifts the equilibrium between 70S ribosomes and their 50S and 30S subunits in favor of the free subunits, thus enhancing the availability of 30S subunits on which protein synthesis initiation begins. The sequence is that of Translation initiation factor IF-3 from Acinetobacter baylyi (strain ATCC 33305 / BD413 / ADP1).